The sequence spans 342 residues: Glycerol-3-phosphate dehydrogenase [NAD(P)+] (342 aa).

3 residues coordinate NADPH: W11, R33, and K107. Sn-glycerol 3-phosphate is bound by residues K107, G143, and S145. A147 provides a ligand contact to NADPH. Residues K198, D251, S261, R262, and N263 each contribute to the sn-glycerol 3-phosphate site. The Proton acceptor role is filled by K198. R262 lines the NADPH pocket. NADPH contacts are provided by V286 and E288.

This sequence belongs to the NAD-dependent glycerol-3-phosphate dehydrogenase family.

It localises to the cytoplasm. The catalysed reaction is sn-glycerol 3-phosphate + NAD(+) = dihydroxyacetone phosphate + NADH + H(+). It catalyses the reaction sn-glycerol 3-phosphate + NADP(+) = dihydroxyacetone phosphate + NADPH + H(+). It participates in membrane lipid metabolism; glycerophospholipid metabolism. Its function is as follows. Catalyzes the reduction of the glycolytic intermediate dihydroxyacetone phosphate (DHAP) to sn-glycerol 3-phosphate (G3P), the key precursor for phospholipid synthesis. The sequence is that of Glycerol-3-phosphate dehydrogenase [NAD(P)+] from Paracidovorax citrulli (strain AAC00-1) (Acidovorax citrulli).